Here is a 207-residue protein sequence, read N- to C-terminus: C-type lectin domain family 2 member D (207 aa).

Residues methionine 1–lysine 41 lie on the Cytoplasmic side of the membrane. Residues serine 7 and serine 12 each carry the phosphoserine modification. The chain crosses the membrane as a helical; Signal-anchor for type II membrane protein span at residues leucine 42–alanine 62. Residues leucine 63–serine 207 lie on the Extracellular side of the membrane. Cysteine 80 and cysteine 91 are oxidised to a cystine. The C-type lectin domain maps to valine 87 to threonine 202. Residue asparagine 100 is glycosylated (N-linked (GlcNAc...) asparagine).

Homodimer; disulfide-linked. N-glycosylated. As to expression, detected in fetal heart, brain, lung, chondrocytes, perichondrium and osteoblasts, and in adult splenocytes, thymocytes, lymph-node cells, osteoblasts, growth plate chondrocytes and skeletal muscle overlying the bone (at protein level). Ubiquitous. Detected in thymus, bone marrow, lung, gut, heart, skeletal muscle, ovary, spleen, ileum, liver and kidney.

Its subcellular location is the cell membrane. Its function is as follows. Receptor for KLRB1B that protects target cells against natural killer cell-mediated lysis. Inhibits osteoclast formation. Binds high molecular weight sulfated glycosaminoglycans. The chain is C-type lectin domain family 2 member D (Clec2d) from Mus musculus (Mouse).